A 494-amino-acid polypeptide reads, in one-letter code: Solute carrier family 2, facilitated glucose transporter member 3 (494 aa).

Topologically, residues 1-10 are cytoplasmic; sequence MGTTKVTTPL. The chain crosses the membrane as a helical span at residues 11–32; that stretch reads IFAISIATIGSFQFGYNTGVIN. Residues 33–64 lie on the Extracellular side of the membrane; that stretch reads APEAIIKDFLNYTLEERSETPPSSVLLTSLWS. N-linked (GlcNAc...) asparagine glycosylation occurs at Asn43. Residues 65–85 traverse the membrane as a helical segment; that stretch reads LSVAIFSVGGMIGSFSVGLFV. The Cytoplasmic segment spans residues 86–90; the sequence is NRFGR. A helical transmembrane segment spans residues 91–111; the sequence is RNSMLIVNLLAIAGGCLMGFC. Residues 112-118 are Extracellular-facing; sequence KIAESVE. The helical transmembrane segment at 119–142 threads the bilayer; it reads MLILGRLIIGLFCGLCTGFVPMYI. Residues 143–153 are Cytoplasmic-facing; sequence GEISPTALRGA. A helical membrane pass occupies residues 154–174; sequence FGTLNQLGIVIGILVAQIFGL. D-glucose is bound at residue Gln159. Topologically, residues 175–183 are extracellular; sequence KVILGTEDL. A helical transmembrane segment spans residues 184–204; the sequence is WPLLLGFTILPAIIQCAALPF. Residues 205 to 269 lie on the Cytoplasmic side of the membrane; the sequence is CPESPRFLLI…LFRAPNYRQP (65 aa). Thr232 carries the phosphothreonine modification. A helical membrane pass occupies residues 270–290; it reads IIISIMLQLSQQLSGINAVFY. Positions 277 to 279 are important for selectivity against fructose; sequence QLS. D-glucose is bound by residues 280–281 and Asn286; that span reads QQ. Residues 291–304 lie on the Extracellular side of the membrane; it reads YSTGIFKDAGVQEP. The helical transmembrane segment at 305 to 325 threads the bilayer; it reads VYATIGAGVVNTIFTVVSVFL. Asn315 lines the D-glucose pocket. The Cytoplasmic portion of the chain corresponds to 326-331; the sequence is VERAGR. The chain crosses the membrane as a helical span at residues 332 to 352; that stretch reads RTLHLIGLGGMAFCSILMTIS. Over 353 to 363 the chain is Extracellular; the sequence is LLLKDNYSWMS. The chain crosses the membrane as a helical span at residues 364-389; that stretch reads FICIGAILVFVAFFEIGPGPIPWFIV. D-glucose-binding residues include Glu378 and Trp386. At 390–399 the chain is on the cytoplasmic side; it reads AELFGQGPRP. A helical membrane pass occupies residues 400–420; the sequence is AAMAVAGCSNWTSNFLVGLLF. Topologically, residues 421–429 are extracellular; the sequence is PSATFYLGA. A helical transmembrane segment spans residues 430-450; the sequence is YVFIVFTVFLVIFWVFTFFKV. The Cytoplasmic segment spans residues 451–494; that stretch reads PETRGRTFEEITRAFEGQVQTGTRGEKGPIMEMNSIQPTKDTNA. Residues 473–494 are disordered; it reads TRGEKGPIMEMNSIQPTKDTNA. The span at 484 to 494 shows a compositional bias: polar residues; the sequence is NSIQPTKDTNA. At Ser485 the chain carries Phosphoserine. Thr492 is modified (phosphothreonine).

Belongs to the major facilitator superfamily. Sugar transporter (TC 2.A.1.1) family. Glucose transporter subfamily. As to quaternary structure, interacts with SMIM43; the interaction may promote SLC2A3-mediated glucose transport to meet the energy needs of mesendoderm differentiation. As to expression, detected in placenta.

The protein localises to the cell membrane. It localises to the perikaryon. The protein resides in the cell projection. The catalysed reaction is D-glucose(out) = D-glucose(in). It carries out the reaction D-galactose(in) = D-galactose(out). Deoxyglucose transport is inhibited by D-glucose, D-galactose and maltose. Galactose transport is inhibited by D-glucose and maltose. Facilitative glucose transporter. Can also mediate the uptake of various other monosaccharides across the cell membrane. Mediates the uptake of glucose, 2-deoxyglucose, galactose, mannose, xylose and fucose, and probably also dehydroascorbate. Does not mediate fructose transport. Required for mesendoderm differentiation. The chain is Solute carrier family 2, facilitated glucose transporter member 3 from Ovis aries (Sheep).